A 68-amino-acid chain; its full sequence is Cytochrome c3 (68 aa).

Positions 17, 20, 26, 29, 30, 45, 49, 52, 53, 62, 65, and 66 each coordinate heme.

In terms of processing, binds 3 heme groups per subunit.

In terms of biological role, participates in sulfate respiration coupled with phosphorylation by transferring electrons from the enzyme dehydrogenase to ferredoxin. This chain is Cytochrome c3 (cyd), found in Desulfuromonas acetoxidans (Chloropseudomonas ethylica).